The following is a 281-amino-acid chain: Diaminopimelate epimerase (281 aa).

Positions 13 and 66 each coordinate substrate. Cys75 serves as the catalytic Proton donor. Substrate is bound by residues Gly76–Asn77, Asn164, Asn197, and Glu215–Arg216. The active-site Proton acceptor is Cys224. A substrate-binding site is contributed by Gly225–Thr226.

This sequence belongs to the diaminopimelate epimerase family. In terms of assembly, homodimer.

It localises to the cytoplasm. It catalyses the reaction (2S,6S)-2,6-diaminopimelate = meso-2,6-diaminopimelate. Its pathway is amino-acid biosynthesis; L-lysine biosynthesis via DAP pathway; DL-2,6-diaminopimelate from LL-2,6-diaminopimelate: step 1/1. Functionally, catalyzes the stereoinversion of LL-2,6-diaminopimelate (L,L-DAP) to meso-diaminopimelate (meso-DAP), a precursor of L-lysine and an essential component of the bacterial peptidoglycan. The chain is Diaminopimelate epimerase from Gloeothece citriformis (strain PCC 7424) (Cyanothece sp. (strain PCC 7424)).